Here is a 295-residue protein sequence, read N- to C-terminus: 4-hydroxy-tetrahydrodipicolinate synthase (295 aa).

Threonine 46 is a binding site for pyruvate. Tyrosine 134 (proton donor/acceptor) is an active-site residue. Lysine 162 (schiff-base intermediate with substrate) is an active-site residue. Valine 204 provides a ligand contact to pyruvate.

It belongs to the DapA family. As to quaternary structure, homotetramer; dimer of dimers.

It is found in the cytoplasm. The enzyme catalyses L-aspartate 4-semialdehyde + pyruvate = (2S,4S)-4-hydroxy-2,3,4,5-tetrahydrodipicolinate + H2O + H(+). It functions in the pathway amino-acid biosynthesis; L-lysine biosynthesis via DAP pathway; (S)-tetrahydrodipicolinate from L-aspartate: step 3/4. In terms of biological role, catalyzes the condensation of (S)-aspartate-beta-semialdehyde [(S)-ASA] and pyruvate to 4-hydroxy-tetrahydrodipicolinate (HTPA). This chain is 4-hydroxy-tetrahydrodipicolinate synthase, found in Oceanobacillus iheyensis (strain DSM 14371 / CIP 107618 / JCM 11309 / KCTC 3954 / HTE831).